Here is a 318-residue protein sequence, read N- to C-terminus: Methionyl-tRNA formyltransferase (318 aa).

Residue 112 to 115 (SLLP) coordinates (6S)-5,6,7,8-tetrahydrofolate.

It belongs to the Fmt family.

It carries out the reaction L-methionyl-tRNA(fMet) + (6R)-10-formyltetrahydrofolate = N-formyl-L-methionyl-tRNA(fMet) + (6S)-5,6,7,8-tetrahydrofolate + H(+). Attaches a formyl group to the free amino group of methionyl-tRNA(fMet). The formyl group appears to play a dual role in the initiator identity of N-formylmethionyl-tRNA by promoting its recognition by IF2 and preventing the misappropriation of this tRNA by the elongation apparatus. The chain is Methionyl-tRNA formyltransferase from Citrifermentans bemidjiense (strain ATCC BAA-1014 / DSM 16622 / JCM 12645 / Bem) (Geobacter bemidjiensis).